Consider the following 382-residue polypeptide: Anhydro-N-acetylmuramic acid kinase (382 aa).

22-29 (GTSMDGVD) contacts ATP.

Belongs to the anhydro-N-acetylmuramic acid kinase family.

It carries out the reaction 1,6-anhydro-N-acetyl-beta-muramate + ATP + H2O = N-acetyl-D-muramate 6-phosphate + ADP + H(+). The protein operates within amino-sugar metabolism; 1,6-anhydro-N-acetylmuramate degradation. It participates in cell wall biogenesis; peptidoglycan recycling. Its function is as follows. Catalyzes the specific phosphorylation of 1,6-anhydro-N-acetylmuramic acid (anhMurNAc) with the simultaneous cleavage of the 1,6-anhydro ring, generating MurNAc-6-P. Is required for the utilization of anhMurNAc either imported from the medium or derived from its own cell wall murein, and thus plays a role in cell wall recycling. This is Anhydro-N-acetylmuramic acid kinase from Burkholderia ambifaria (strain ATCC BAA-244 / DSM 16087 / CCUG 44356 / LMG 19182 / AMMD) (Burkholderia cepacia (strain AMMD)).